A 493-amino-acid chain; its full sequence is 1-aminocyclopropane-1-carboxylate synthase CMW33 (493 aa).

Residue Lys279 is modified to N6-(pyridoxal phosphate)lysine.

Belongs to the class-I pyridoxal-phosphate-dependent aminotransferase family. Homodimer. It depends on pyridoxal 5'-phosphate as a cofactor.

It catalyses the reaction S-adenosyl-L-methionine = 1-aminocyclopropane-1-carboxylate + S-methyl-5'-thioadenosine + H(+). Its pathway is alkene biosynthesis; ethylene biosynthesis via S-adenosyl-L-methionine; ethylene from S-adenosyl-L-methionine: step 1/2. Catalyzes the formation of 1-aminocyclopropane-1-carboxylate, a direct precursor of ethylene in higher plants. This is 1-aminocyclopropane-1-carboxylate synthase CMW33 (ACS1) from Cucurbita maxima (Pumpkin).